Here is a 793-residue protein sequence, read N- to C-terminus: Protein zer-1 homolog (793 aa).

LRR repeat units follow at residues 84–108 (RTSLKIVNLRNSTLSSIGLETLMRH), 187–210 (LHDLGHLDLTSCVLANFSLEALGS), and 269–294 (LRHLTHLDISGTNLAGNGVATKESTT).

It belongs to the zyg-11 family.

In terms of biological role, serves as substrate adapter subunit in an E3 ubiquitin ligase complex CG12084-cul-2-elongin BC. Targets substrates bearing N-terminal glycine degrons for proteasomal degradation. This Drosophila melanogaster (Fruit fly) protein is Protein zer-1 homolog.